The sequence spans 230 residues: MILIEHILGNVKKDPVWQAKLKDATFDLLILDQREAQKSRCRKSSTQGLDLGISLDRHVVLADGDVLAWDEENNVAVVVQINLRDVMVIDLSELKSRSPDELIKTCFELGHALGNQHWKAVTKHNEVYVPLTVATSMMDSVMRTHGFQHLPFRFVKGAEILPQLSNSEARLLFGGAEDSDTHVHVDSPLDEPHGSGLHVHAIHSHGDGHSHSHSHDHDHDHRHDDHDHKH.

2 stretches are compositionally biased toward basic and acidic residues: residues 182-193 (HVHVDSPLDEPH) and 204-230 (SHGDGHSHSHSHDHDHDHRHDDHDHKH). Residues 182 to 230 (HVHVDSPLDEPHGSGLHVHAIHSHGDGHSHSHSHDHDHDHRHDDHDHKH) form a disordered region.

It belongs to the UreE family.

It localises to the cytoplasm. Its function is as follows. Involved in urease metallocenter assembly. Binds nickel. Probably functions as a nickel donor during metallocenter assembly. This Yersinia mollaretii protein is Urease accessory protein UreE.